We begin with the raw amino-acid sequence, 570 residues long: Sulfite reductase [NADPH] hemoprotein beta-component (570 aa).

Residues cysteine 434, cysteine 440, cysteine 479, and cysteine 483 each contribute to the [4Fe-4S] cluster site. Residue cysteine 483 participates in siroheme binding.

This sequence belongs to the nitrite and sulfite reductase 4Fe-4S domain family. In terms of assembly, alpha(8)-beta(8). The alpha component is a flavoprotein, the beta component is a hemoprotein. Siroheme serves as cofactor. It depends on [4Fe-4S] cluster as a cofactor.

It carries out the reaction hydrogen sulfide + 3 NADP(+) + 3 H2O = sulfite + 3 NADPH + 4 H(+). It functions in the pathway sulfur metabolism; hydrogen sulfide biosynthesis; hydrogen sulfide from sulfite (NADPH route): step 1/1. Its function is as follows. Component of the sulfite reductase complex that catalyzes the 6-electron reduction of sulfite to sulfide. This is one of several activities required for the biosynthesis of L-cysteine from sulfate. The protein is Sulfite reductase [NADPH] hemoprotein beta-component of Salmonella gallinarum (strain 287/91 / NCTC 13346).